Here is a 277-residue protein sequence, read N- to C-terminus: Uridine-cytidine kinase 1 (277 aa).

Residues 1–30 form a disordered region; it reads MASAGGEDCESPAPEADRPHQRPFLIGVSG. Position 30 to 38 (30 to 38) interacts with ATP; the sequence is GGTASGKST. D65 is an active-site residue. The substrate site is built by D87, Y115, H120, R169, R178, and Q186. An ATP-binding site is contributed by D215. Residues 247-277 form a disordered region; that stretch reads SYKRTFSEPGDHPGMLTSGKRSHLESSSRPH. T251 bears the Phosphothreonine mark. S253 carries the post-translational modification Phosphoserine. Residues 268–277 are compositionally biased toward basic and acidic residues; it reads SHLESSSRPH.

It belongs to the uridine kinase family. Ubiquitous.

The enzyme catalyses uridine + ATP = UMP + ADP + H(+). It catalyses the reaction cytidine + ATP = CMP + ADP + H(+). It functions in the pathway pyrimidine metabolism; CTP biosynthesis via salvage pathway; CTP from cytidine: step 1/3. The protein operates within pyrimidine metabolism; UMP biosynthesis via salvage pathway; UMP from uridine: step 1/1. In terms of biological role, phosphorylates uridine and cytidine to uridine monophosphate and cytidine monophosphate. Does not phosphorylate deoxyribonucleosides or purine ribonucleosides. Can use ATP or GTP as a phosphate donor. Can also phosphorylate cytidine and uridine nucleoside analogs such as 6-azauridine, 5-fluorouridine, 4-thiouridine, 5-bromouridine, N(4)-acetylcytidine, N(4)-benzoylcytidine, 5-fluorocytidine, 2-thiocytidine, 5-methylcytidine, and N(4)-anisoylcytidine. The chain is Uridine-cytidine kinase 1 (UCK1) from Homo sapiens (Human).